The chain runs to 284 residues: Digeranylgeranylglyceryl phosphate synthase (284 aa).

7 helical membrane passes run 10–30 (IHNV…SSMW), 37–57 (LILA…INDV), 76–98 (AVSL…ILSA), 102–119 (YLQF…IFYA), 126–146 (GIYG…YGGL), 217–237 (LPLF…FLYI), and 260–280 (GSAF…QFLF).

Belongs to the UbiA prenyltransferase family. DGGGP synthase subfamily. Requires Mg(2+) as cofactor.

It localises to the cell membrane. The catalysed reaction is sn-3-O-(geranylgeranyl)glycerol 1-phosphate + (2E,6E,10E)-geranylgeranyl diphosphate = 2,3-bis-O-(geranylgeranyl)-sn-glycerol 1-phosphate + diphosphate. The protein operates within membrane lipid metabolism; glycerophospholipid metabolism. Its function is as follows. Prenyltransferase that catalyzes the transfer of the geranylgeranyl moiety of geranylgeranyl diphosphate (GGPP) to the C2 hydroxyl of (S)-3-O-geranylgeranylglyceryl phosphate (GGGP). This reaction is the second ether-bond-formation step in the biosynthesis of archaeal membrane lipids. In Metallosphaera sedula (strain ATCC 51363 / DSM 5348 / JCM 9185 / NBRC 15509 / TH2), this protein is Digeranylgeranylglyceryl phosphate synthase.